A 180-amino-acid polypeptide reads, in one-letter code: Large ribosomal subunit protein uL6 (180 aa).

This sequence belongs to the universal ribosomal protein uL6 family. Part of the 50S ribosomal subunit.

Functionally, this protein binds to the 23S rRNA, and is important in its secondary structure. It is located near the subunit interface in the base of the L7/L12 stalk, and near the tRNA binding site of the peptidyltransferase center. In Lachnoclostridium phytofermentans (strain ATCC 700394 / DSM 18823 / ISDg) (Clostridium phytofermentans), this protein is Large ribosomal subunit protein uL6.